A 308-amino-acid polypeptide reads, in one-letter code: Urease accessory protein UreD (308 aa).

This sequence belongs to the UreD family. As to quaternary structure, ureD, UreF and UreG form a complex that acts as a GTP-hydrolysis-dependent molecular chaperone, activating the urease apoprotein by helping to assemble the nickel containing metallocenter of UreC. The UreE protein probably delivers the nickel.

It localises to the cytoplasm. In terms of biological role, required for maturation of urease via the functional incorporation of the urease nickel metallocenter. This chain is Urease accessory protein UreD, found in Psychromonas ingrahamii (strain DSM 17664 / CCUG 51855 / 37).